Reading from the N-terminus, the 75-residue chain is Probable pilin MJ0431 (75 aa).

Residues 1 to 15 (MGKMKILKKLLSKKG) constitute a propeptide that is removed on maturation. The QXSXEXXXL motif lies at 16–24 (QLSMEVGVL).

In terms of processing, the N-terminus is cleaved by the prepilin peptidase EppA, which recognizes the class III signal sequence.

The protein resides in the secreted. It is found in the cell surface. The protein localises to the fimbrium. The sequence is that of Probable pilin MJ0431 from Methanocaldococcus jannaschii (strain ATCC 43067 / DSM 2661 / JAL-1 / JCM 10045 / NBRC 100440) (Methanococcus jannaschii).